We begin with the raw amino-acid sequence, 177 residues long: Nucleoside triphosphate/diphosphate phosphatase (177 aa).

Arg-23 (proton donor) is an active-site residue. Positions 87, 103, 105, 107, 120, and 123 each coordinate Mg(2+).

It belongs to the Ntdp family. Mg(2+) is required as a cofactor.

The enzyme catalyses a ribonucleoside 5'-triphosphate + H2O = a ribonucleoside 5'-diphosphate + phosphate + H(+). The catalysed reaction is a ribonucleoside 5'-diphosphate + H2O = a ribonucleoside 5'-phosphate + phosphate + H(+). Functionally, has nucleoside phosphatase activity towards nucleoside triphosphates and nucleoside diphosphates. This chain is Nucleoside triphosphate/diphosphate phosphatase, found in Streptococcus suis (strain 98HAH33).